Reading from the N-terminus, the 286-residue chain is uncharacterized protein (286 aa).

The 221-residue stretch at Glu-36–Lys-256 folds into the Radical SAM core domain. 3 residues coordinate [4Fe-4S] cluster: Cys-50, Cys-54, and Cys-57.

Requires [4Fe-4S] cluster as cofactor.

This is an uncharacterized protein from Methanocaldococcus jannaschii (strain ATCC 43067 / DSM 2661 / JAL-1 / JCM 10045 / NBRC 100440) (Methanococcus jannaschii).